A 414-amino-acid polypeptide reads, in one-letter code: Histidine--tRNA ligase (414 aa).

Belongs to the class-II aminoacyl-tRNA synthetase family. In terms of assembly, homodimer.

It localises to the cytoplasm. It catalyses the reaction tRNA(His) + L-histidine + ATP = L-histidyl-tRNA(His) + AMP + diphosphate + H(+). This Solibacter usitatus (strain Ellin6076) protein is Histidine--tRNA ligase.